The following is a 239-amino-acid chain: uncharacterized protein (239 aa).

It belongs to the initiator RepB protein family.

Its function is as follows. Mutations in ORF 239 affects the incN plasmid pUC1 E.coli polA-independence but not its autonomous replication ability. This is an uncharacterized protein from Escherichia coli.